Reading from the N-terminus, the 182-residue chain is UPF0316 protein BCQ_3166 (182 aa).

3 consecutive transmembrane segments (helical) span residues 6-26 (LIFV…ILLV), 32-52 (SAAA…GIVF), and 58-78 (WMNI…GGYI).

It belongs to the UPF0316 family.

The protein resides in the cell membrane. The protein is UPF0316 protein BCQ_3166 of Bacillus cereus (strain Q1).